Here is a 397-residue protein sequence, read N- to C-terminus: uncharacterized protein (397 aa).

2 positions are modified to phosphoserine: Ser-115 and Ser-141. The segment at 135 to 156 (NSLNHDSPPHTPARRSDNSTSK) is disordered. A Glycyl lysine isopeptide (Lys-Gly) (interchain with G-Cter in SUMO2) cross-link involves residue Lys-239. 2 positions are modified to phosphoserine: Ser-269 and Ser-296. Residues 289–316 (GRGPTKASPQPALTVKAKATSSATTLAS) are disordered. A compositionally biased stretch (low complexity) spans 300–316 (ALTVKAKATSSATTLAS). Position 342 is a phosphoserine (Ser-342). Residues 354-397 (SEAQDSQVTSTKSPTVRCIVPDPPAPLASQRPPRRRWRRTCKDC) are disordered. Polar residues predominate over residues 356-367 (AQDSQVTSTKSP). Basic residues predominate over residues 385–397 (PPRRRWRRTCKDC).

This is an uncharacterized protein from Rattus norvegicus (Rat).